The chain runs to 942 residues: MKRRAGLGGSMRSVVGFLSQRGLHGDPLLTQDFQRRRLRGCRNLYKKDLLGHFGCVNAIEFSNNGGQWLVSGGDDRRVLLWHMEQAIHSRVKPIQLKGEHHSNIFCLAFNSGNTKVFSGGNDEQVILHDVESSETLDVFAHEDAVYGLSVSPVNDNIFASSSDDGRVLIWDIRESPHGEPFCLANYPSAFHSVMFNPVEPRLLATANSKEGVGLWDIRKPQSSLLRYGGNLSLQSAMSVRFNSNGTQLLALRRRLPPVLYDIHSRLPVFQFDNQGYFNSCTMKSCCFAGDRDQYILSGSDDFNLYMWRIPADPEAGGIGRVVNGAFMVLKGHRSIVNQVRFNPHTYMICSSGVEKIIKIWSPYKQPGCTGDLDGRIEDDSRCLYTHEEYISLVLNSGSGLSHDYANQSVQEDPRMMAFFDSLVRREIEGWSSDSDSDLSESTILQLHAGVSERSGYTDSESSASLPRSPPPTVDESADNAFHLGPLRVTTTNTVASTPPTPTCEDAASRQQRLSALRRYQDKRLLALSNESDSEENVCEVELDTDLFPRPRSPSPEDESSSSSSSSSSEDEEELNERRASTWQRNAMRRRQKTTREDKPSAPIKPTNTYIGEDNYDYPQIKVDDLSSSPTSSPERSTSTLEIQPSRASPTSDIESVERKIYKAYKWLRYSYISYSNNKDGETSLVTGEADEGRAGTSHKDNPAPSSSKEACLNIAMAQRNQDLPPEGCSKDTFKEETPRTPSNGPGHEHSSHAWAEVPEGTSQDTGNSGSVEHPFETKKLNGKALSSRAEEPPSPPVPKASGSTLNSGSGNCPRTQSDDSEERSLETICANHNNGRLHPRPPHPHNNGQNLGELEVVAYSSPGHSDTDRDNSSLTGTLLHKDCCGSEMACETPNAGTREDPTDTPATDSSRAVHGHSGLKRQRIELEDTDSENSSSEKKLKT.

WD repeat units lie at residues 51 to 91 (GHFG…HSRV), 99 to 139 (EHHS…LDVF), 140 to 180 (AHED…HGEP), 185 to 225 (NYPS…SSLL), 277 to 317 (FNSC…EAGG), and 331 to 370 (GHRS…GCTG). Disordered regions lie at residues 449–478 (GVSE…ESAD) and 490–509 (TTNT…AASR). The span at 454-465 (SGYTDSESSASL) shows a compositional bias: polar residues. Thr-500 is modified (phosphothreonine). 7 positions are modified to phosphoserine: Ser-531, Ser-533, Ser-626, Ser-628, Ser-645, Ser-648, and Ser-651. Disordered regions lie at residues 544–655 (TDLF…DIES), 676–824 (NNKD…EERS), and 889–942 (ACET…KLKT). Low complexity predominate over residues 625-641 (LSSSPTSSPERSTSTLE). Basic and acidic residues-rich tracts occupy residues 690–701 (DEGRAGTSHKDN) and 728–738 (CSKDTFKEETP). Residues 760 to 770 (GTSQDTGNSGS) show a composition bias toward polar residues. Ser-794 is modified (phosphoserine). Over residues 801 to 815 (SGSTLNSGSGNCPRT) the composition is skewed to polar residues.

Interacts with DDB1, CUL4A or CUL4B. Interacts with L3MBTL3. Interacts with DNMT1. Interacts with E2F1. Interacts with SOX2. As to expression, ubiquitous.

It participates in protein modification; protein ubiquitination. In terms of biological role, is a substrate receptor for the CUL4-DDB1 E3 ubiquitin-protein ligase complex (CRL4). The complex CRL4-DCAF5 is involved in the ubiquitination of a set of methylated non-histone proteins, including SOX2, DNMT1 and E2F1. The sequence is that of DDB1- and CUL4-associated factor 5 (DCAF5) from Homo sapiens (Human).